A 124-amino-acid polypeptide reads, in one-letter code: Large ribosomal subunit protein bL20 (124 aa).

The protein belongs to the bacterial ribosomal protein bL20 family.

Its function is as follows. Binds directly to 23S ribosomal RNA and is necessary for the in vitro assembly process of the 50S ribosomal subunit. It is not involved in the protein synthesizing functions of that subunit. This is Large ribosomal subunit protein bL20 (rplT) from Mycoplasma genitalium (strain ATCC 33530 / DSM 19775 / NCTC 10195 / G37) (Mycoplasmoides genitalium).